The chain runs to 233 residues: Large ribosomal subunit protein uL2 (233 aa).

The tract at residues 194-233 (HPHGGGNHQHVGRPSTVGRGTPPGRKVGRLSPKRRKKYGR) is disordered. Basic residues predominate over residues 219–233 (KVGRLSPKRRKKYGR).

This sequence belongs to the universal ribosomal protein uL2 family. Part of the 50S ribosomal subunit. Forms a bridge to the 30S subunit in the 70S ribosome.

In terms of biological role, one of the primary rRNA binding proteins. Required for association of the 30S and 50S subunits to form the 70S ribosome, for tRNA binding and peptide bond formation. It has been suggested to have peptidyltransferase activity; this is somewhat controversial. Makes several contacts with the 16S rRNA in the 70S ribosome. This is Large ribosomal subunit protein uL2 from Picrophilus torridus (strain ATCC 700027 / DSM 9790 / JCM 10055 / NBRC 100828 / KAW 2/3).